The sequence spans 275 residues: Sulfur carrier protein FdhD (275 aa).

Cys121 functions as the Cysteine persulfide intermediate in the catalytic mechanism. 258-263 (FSKPGR) lines the Mo-bis(molybdopterin guanine dinucleotide) pocket.

Belongs to the FdhD family.

The protein resides in the cytoplasm. Required for formate dehydrogenase (FDH) activity. Acts as a sulfur carrier protein that transfers sulfur from IscS to the molybdenum cofactor prior to its insertion into FDH. The sequence is that of Sulfur carrier protein FdhD from Yersinia enterocolitica serotype O:8 / biotype 1B (strain NCTC 13174 / 8081).